A 325-amino-acid polypeptide reads, in one-letter code: Tagatose 1,6-diphosphate aldolase (325 aa).

Belongs to the aldolase LacD family.

It carries out the reaction D-tagatofuranose 1,6-bisphosphate = D-glyceraldehyde 3-phosphate + dihydroxyacetone phosphate. Its pathway is carbohydrate metabolism; D-tagatose 6-phosphate degradation; D-glyceraldehyde 3-phosphate and glycerone phosphate from D-tagatose 6-phosphate: step 2/2. The sequence is that of Tagatose 1,6-diphosphate aldolase from Staphylococcus haemolyticus (strain JCSC1435).